Consider the following 502-residue polypeptide: MAFKLSTKHLADIGAQTEKSIRIPSYDRNDVKEGIVHVGVGGFHRAHLAVYVDKLMQSHGVRDYAICGVGLQPADASMRDVLASQDHMYTVIERSAAGSTAHVVGSIRNFLFAPDDREAVIAKMAHPDTHIVSLTITESGYYYNENTHELQSEHPDIQHDLDPANAAKPKTTFGFLYAAMVRRREQGLKPFTVLSCDNMLKNGSITRNMLQSFAKLKDPSMADWIAQYGGFPNAMVDRITPRTSDPDIKELADKFKIDDAWPVVTEPFMQWVVEDKFADGRPPFDLVGVQVVKDVKDVEQFEKHKLRLLNASHSAMGYPGQLAGFKYVHEVMEHPLYRKFIWQMMQEEVKPLLPEIPGVDIDAYCNTLMERFSNPTIMDQLPRIALNSSGKMPQFVMPSIAEAIWVTGPFRRLVFVAACWFRYVLGVDDKGNKFEVDDPMREELQSKAQAGGTKPHEILSIKSLFGDDLRGDERFLKEVTQAMEDIARDGVMATMPKFVNDA.

NAD(+) is bound at residue 35-46 (IVHVGVGGFHRA).

The protein belongs to the mannitol dehydrogenase family. Monomer.

It catalyses the reaction D-mannitol + NAD(+) = D-fructose + NADH + H(+). In terms of biological role, catalyzes the NAD(H)-dependent interconversion of D-fructose and D-mannitol in the mannitol metabolic pathway. This is Mannitol 2-dehydrogenase from Pyricularia oryzae (strain 70-15 / ATCC MYA-4617 / FGSC 8958) (Rice blast fungus).